The primary structure comprises 202 residues: Small ribosomal subunit protein uS4 (202 aa).

Positions 1 to 13 are enriched in basic residues; it reads MSRYRGPRLRITR. The tract at residues 1–43 is disordered; that stretch reads MSRYRGPRLRITRRLGDLPGLTRKAAKRSHPPGQHGQARRKRS. The S4 RNA-binding domain maps to 90–152; the sequence is NRLDNVCFRL…KASKQLAQAN (63 aa).

The protein belongs to the universal ribosomal protein uS4 family. Part of the 30S ribosomal subunit. Contacts protein S5. The interaction surface between S4 and S5 is involved in control of translational fidelity.

One of the primary rRNA binding proteins, it binds directly to 16S rRNA where it nucleates assembly of the body of the 30S subunit. Its function is as follows. With S5 and S12 plays an important role in translational accuracy. This chain is Small ribosomal subunit protein uS4, found in Prochlorococcus marinus (strain NATL2A).